The following is a 209-amino-acid chain: Uracil phosphoribosyltransferase (209 aa).

Residues Arg-79, Arg-104, and 131–139 (DPMLATGHT) each bind 5-phospho-alpha-D-ribose 1-diphosphate. Uracil is bound by residues Ile-194 and 199-201 (GDA). Asp-200 lines the 5-phospho-alpha-D-ribose 1-diphosphate pocket.

It belongs to the UPRTase family. Mg(2+) serves as cofactor.

It carries out the reaction UMP + diphosphate = 5-phospho-alpha-D-ribose 1-diphosphate + uracil. The protein operates within pyrimidine metabolism; UMP biosynthesis via salvage pathway; UMP from uracil: step 1/1. With respect to regulation, allosterically activated by GTP. Its function is as follows. Catalyzes the conversion of uracil and 5-phospho-alpha-D-ribose 1-diphosphate (PRPP) to UMP and diphosphate. This chain is Uracil phosphoribosyltransferase, found in Caulobacter sp. (strain K31).